Reading from the N-terminus, the 552-residue chain is Phosphoglucomutase (552 aa).

The Phosphoserine intermediate role is filled by Ser-143. Ser-143, Asp-295, Asp-297, and Asp-299 together coordinate Mg(2+).

This sequence belongs to the phosphohexose mutase family. The cofactor is Mg(2+).

The enzyme catalyses alpha-D-glucose 1-phosphate = alpha-D-glucose 6-phosphate. The protein operates within glycolipid metabolism; diglucosyl-diacylglycerol biosynthesis. Its function is as follows. Catalyzes the interconversion between glucose-6-phosphate and alpha-glucose-1-phosphate. This is the first step in the biosynthesis of diglucosyl-diacylglycerol (Glc2-DAG), i.e. the predominant glycolipid found in the S.aureus membrane, which is also used as a membrane anchor for lipoteichoic acid (LTA). The chain is Phosphoglucomutase (pgcA) from Staphylococcus aureus (strain bovine RF122 / ET3-1).